The following is a 583-amino-acid chain: Pyruvate kinase isozyme A, chloroplastic (583 aa).

A chloroplast-targeting transit peptide spans 1 to 74 (MSQSLHFSPN…NSGVLYNNNN (74 aa)). The span at 43 to 52 (KASTSPSSSS) shows a compositional bias: low complexity. The segment at 43–75 (KASTSPSSSSDPQVLVADNGTGNSGVLYNNNNK) is disordered. The span at 62–75 (GTGNSGVLYNNNNK) shows a compositional bias: polar residues. Position 134 (R134) interacts with substrate. N136, D168, and T169 together coordinate K(+). An ATP-binding site is contributed by 136–139 (NMCH). Residue E333 participates in Mg(2+) binding. Substrate contacts are provided by G356, D357, and S389. D357 lines the Mg(2+) pocket.

This sequence belongs to the pyruvate kinase family. As to quaternary structure, oligomer of alpha and beta subunits. It depends on Mg(2+) as a cofactor. K(+) serves as cofactor.

Its subcellular location is the plastid. It localises to the chloroplast. It catalyses the reaction pyruvate + ATP = phosphoenolpyruvate + ADP + H(+). Its pathway is carbohydrate degradation; glycolysis; pyruvate from D-glyceraldehyde 3-phosphate: step 5/5. This is Pyruvate kinase isozyme A, chloroplastic from Ricinus communis (Castor bean).